A 459-amino-acid chain; its full sequence is DNA-binding protein P3A2 (459 aa).

Residues 1–25 (MMISEDISEPSSPDTPFDDSDLLNS) form a disordered region.

The protein belongs to the NRF1/Ewg family.

The protein resides in the nucleus. Transcriptional regulator that interacts with specific sites in the control region of the cyIIIa actin gene. Also binds specifically to similar target sites located in the regulatory region of the SM50 gene. The polypeptide is DNA-binding protein P3A2 (Strongylocentrotus purpuratus (Purple sea urchin)).